The following is a 261-amino-acid chain: Vacuolar protein sorting-associated protein 37D (261 aa).

One can recognise a VPS37 C-terminal domain in the interval Ala-93 to Ala-182. Positions Leu-172–Arg-261 are disordered. Residues Pro-181–Ala-195 show a composition bias toward low complexity. Composition is skewed to pro residues over residues Gly-215–Leu-224 and Pro-231–Arg-261.

It belongs to the VPS37 family. Component of the ESCRT-I complex (endosomal sorting complex required for transport I) which consists of TSG101, VPS28, a VPS37 protein (VPS37A to -D) and MVB12A or MVB12B in a 1:1:1:1 stoichiometry. Interacts with TSG101 and MVB12A. Component of the ESCRT-I complex (endosomal sorting complex required for transport I) which consists of TSG101, VPS28, a VPS37 protein (VPS37A to -D) and UBAP1 in a 1:1:1:1 stoichiometry.

The protein resides in the late endosome membrane. Its function is as follows. Component of the ESCRT-I complex, a regulator of vesicular trafficking process. Required for the sorting of endocytic ubiquitinated cargos into multivesicular bodies. May be involved in cell growth and differentiation. This chain is Vacuolar protein sorting-associated protein 37D, found in Mus musculus (Mouse).